Here is a 153-residue protein sequence, read N- to C-terminus: Lipoprotein signal peptidase (153 aa).

Helical transmembrane passes span 61-81 and 85-105; these read YFFV…LVKN and SLWL…NFID. Active-site residues include Asp114 and Asp130. The chain crosses the membrane as a helical span at residues 125-145; the sequence is IFNVADSYLTVGVLLLILILW.

Belongs to the peptidase A8 family.

The protein resides in the cell membrane. The catalysed reaction is Release of signal peptides from bacterial membrane prolipoproteins. Hydrolyzes -Xaa-Yaa-Zaa-|-(S,diacylglyceryl)Cys-, in which Xaa is hydrophobic (preferably Leu), and Yaa (Ala or Ser) and Zaa (Gly or Ala) have small, neutral side chains.. The protein operates within protein modification; lipoprotein biosynthesis (signal peptide cleavage). Functionally, this protein specifically catalyzes the removal of signal peptides from prolipoproteins. The protein is Lipoprotein signal peptidase of Streptococcus thermophilus (strain CNRZ 1066).